The sequence spans 203 residues: High frequency lysogenization protein HflD homolog (203 aa).

The protein belongs to the HflD family.

The protein resides in the cytoplasm. Its subcellular location is the cell inner membrane. In Pasteurella multocida (strain Pm70), this protein is High frequency lysogenization protein HflD homolog.